The sequence spans 178 residues: Caveolin-1 (178 aa).

At serine 2 the chain carries N-acetylserine. At serine 2 the chain carries Phosphoserine. The tract at residues 2–94 is required for homooligomerization; that stretch reads SGGKYVDSEG…WKASFTTFTV (93 aa). Residues 2-104 lie on the Cytoplasmic side of the membrane; the sequence is SGGKYVDSEG…TKYWFYRLLS (103 aa). Lysine 5 is modified (N6-acetyllysine; alternate). A Glycyl lysine isopeptide (Lys-Gly) (interchain with G-Cter in ubiquitin); alternate cross-link involves residue lysine 5. Residue tyrosine 6 is modified to Phosphotyrosine. Serine 9 is subject to Phosphoserine. Residue tyrosine 14 is modified to Phosphotyrosine; by ABL1. Phosphotyrosine is present on tyrosine 25. Glycyl lysine isopeptide (Lys-Gly) (interchain with G-Cter in ubiquitin) cross-links involve residues lysine 26, lysine 30, lysine 39, lysine 47, and lysine 57. Residues 82–94 form an interaction with CAVIN3 region; that stretch reads DGIWKASFTTFTV. Positions 105–125 form an intramembrane region, helical; it reads AVFGIPMALIWGIYFAIVSFL. The Cytoplasmic segment spans residues 126 to 178; sequence HIWVVVPYIKSFLIEIQCISRVYSIYIHTFCDPLFEAFGKVFSNIRINTQKEI. Residues 131 to 142 form an interacts with SPRY1, SPRY2, SPRY3 and SPRY4 region; the sequence is VPYIKSFLIEIQ. S-palmitoyl cysteine attachment occurs at residues cysteine 143 and cysteine 156. The interacts with SPRY1, SPRY2, and SPRY4 stretch occupies residues 149–160; that stretch reads SIYIHTFCDPLF. The interval 167–178 is interacts with SPRY1, SPRY2, SPRY3 and SPRY4; it reads FSNIRINTQKEI.

The protein belongs to the caveolin family. In terms of assembly, homooligomer. Interacts (via the N-terminus) with DPP4; the interaction is direct. Forms a stable heterooligomeric complex with CAV2 that targets to lipid rafts and drives caveolae formation. Interacts with PACSIN2; this interaction induces membrane tubulation. Interacts with BMX, BTK, CTNNB1, CDH1, GLIPR2, JUP, NOSTRIN, SNAP25 and STX1A. Interacts with SLC7A9. Interacts with TGFBR1. Interacts with CAVIN3 (via leucine-zipper domain) in a cholesterol-sensitive manner. Interacts with CAVIN1. Interacts with EHD2 in a cholesterol-dependent manner. Forms a ternary complex with UBXN6 and VCP; mediates CAV1 targeting to lysosomes for degradation. Interacts with ABCG1; this interaction regulates ABCG1-mediated cholesterol efflux. Interacts with NEU3; this interaction enhances NEU3 sialidase activity within caveola. Interacts (via C-terminus) with SPRY1, SPRY2 (via C-terminus), SPRY3, and SPRY4. Post-translationally, phosphorylated at Tyr-14 by ABL1 in response to oxidative stress. In terms of processing, ubiquitinated. Undergo monoubiquitination and multi- and/or polyubiquitination. Monoubiquitination of N-terminal lysines promotes integration in a ternary complex with UBXN6 and VCP which promotes oligomeric CAV1 targeting to lysosomes for degradation. Ubiquitinated by ZNRF1; leading to degradation and modulation of the TLR4-mediated immune response.

It is found in the golgi apparatus membrane. The protein localises to the cell membrane. The protein resides in the membrane. Its subcellular location is the caveola. It localises to the membrane raft. May act as a scaffolding protein within caveolar membranes. Forms a stable heterooligomeric complex with CAV2 that targets to lipid rafts and drives caveolae formation. Mediates the recruitment of CAVIN proteins (CAVIN1/2/3/4) to the caveolae. Interacts directly with G-protein alpha subunits and can functionally regulate their activity. Involved in the costimulatory signal essential for T-cell receptor (TCR)-mediated T-cell activation. Its binding to DPP4 induces T-cell proliferation and NF-kappa-B activation in a T-cell receptor/CD3-dependent manner. Recruits CTNNB1 to caveolar membranes and may regulate CTNNB1-mediated signaling through the Wnt pathway. Negatively regulates TGFB1-mediated activation of SMAD2/3 by mediating the internalization of TGFBR1 from membrane rafts leading to its subsequent degradation. Binds 20(S)-hydroxycholesterol (20(S)-OHC). The polypeptide is Caveolin-1 (CAV1) (Rhinolophus ferrumequinum (Greater horseshoe bat)).